The chain runs to 2517 residues: Protein capicua homolog (2517 aa).

Disordered regions lie at residues 1-197 (MKPM…SGSY), 300-325 (LSPG…HREP), 342-483 (PWEP…KYKK), 531-579 (EMEG…RGDS), 608-640 (SSRS…FGFR), and 658-767 (VRSR…FRAV). Acidic residues predominate over residues 57–67 (EEAEEGEEEEA). Residues 91–101 (EDPKGDGEAGR) show a composition bias toward basic and acidic residues. Composition is skewed to low complexity over residues 158-167 (TSTRSSSTDT) and 300-313 (LSPG…LPGS). The span at 396 to 405 (HCEEGEEKHP) shows a compositional bias: basic and acidic residues. Over residues 414–428 (LPLPPPQLLSPPPKS) the composition is skewed to pro residues. The segment covering 451–477 (GSRSSSVASLEKGTAPAARARTPLTAA) has biased composition (low complexity). Polar residues predominate over residues 608 to 619 (SSRSGTPSFSPV). Residues 677 to 686 (DLGPHPPPPA) show a composition bias toward pro residues. The span at 698-707 (TFQTNLTFTV) shows a compositional bias: polar residues. A compositionally biased stretch (gly residues) spans 726–735 (GAPGAGGGGA). A phosphoserine mark is found at Ser-776 and Ser-780. Disordered stretches follow at residues 812 to 842 (IVRN…PGRG), 955 to 1110 (PSQP…DHIR), 1179 to 1220 (CNKD…APGV), 1235 to 1274 (SDTK…SLDG), 1290 to 1347 (SGPA…TSDE), 1379 to 1539 (RVTD…ILQT), and 1595 to 1628 (IASK…RVPG). Residues 937–955 (EPRSVAVFPWHSLVPFLAP) are interaction with ATXN1. Positions 959-981 (DPSVQPSEAQQPASHPVASNQSK) are enriched in polar residues. A phosphoserine mark is found at Ser-1055 and Ser-1082. 3 stretches are compositionally biased toward basic and acidic residues: residues 1087-1110 (PKER…DHIR), 1179-1188 (CNKDRKKSSS), and 1200-1209 (GHKETRERSM). At Arg-1099 the chain carries Omega-N-methylarginine. A DNA-binding region (HMG box) is located at residues 1109-1177 (IRRPMNAFMI…AHFKAHPDWK (69 aa)). Ser-1186 carries the phosphoserine modification. Residues 1235–1245 (SDTKAPGSSSC) show a composition bias toward polar residues. Ser-1271 carries the post-translational modification Phosphoserine. Residues 1305–1323 (GAPGPFAAPGEGGALAATG) are compositionally biased toward low complexity. 3 positions are modified to phosphoserine: Ser-1340, Ser-1345, and Ser-1405. Pro residues predominate over residues 1418 to 1430 (PLDPEPPGPPDPP). Positions 1439–1456 (SAPSSSASSPASSSASAA) are enriched in low complexity. Over residues 1457-1474 (TSFSLGSGTFKAQESGQG) the composition is skewed to polar residues. 3 positions are modified to phosphoserine: Ser-1609, Ser-1630, and Ser-1648. Arg-1772 bears the Asymmetric dimethylarginine mark. Positions 1799 to 1818 (QSVPSAPPPKAQSVSPVQAP) are disordered. Arg-1843 is subject to Omega-N-methylarginine. Disordered regions lie at residues 2039–2064 (AATI…FPSA), 2100–2342 (SFEA…AKCE), and 2430–2517 (AATP…ATGR). Residues 2051 to 2064 (ATATPAPTSPFPSA) are compositionally biased toward low complexity. 2 stretches are compositionally biased toward pro residues: residues 2110-2119 (GPAPRQPLEP) and 2136-2145 (PTPPAPPPLP). The segment covering 2146–2155 (ETWTPTARSS) has biased composition (low complexity). An N6-acetyllysine modification is found at Lys-2177. Residues 2198-2209 (PPTPPSPAPAPA) show a composition bias toward pro residues. Phosphothreonine is present on Thr-2200. At Ser-2203 the chain carries Phosphoserine. The segment covering 2210-2225 (VAPGGSSESSSGRAAG) has biased composition (low complexity). Over residues 2249–2278 (KTFDSVDNRVLSEVDFEERFAELPEFRPEE) the composition is skewed to basic and acidic residues. Phosphoserine is present on residues Ser-2260, Ser-2282, Ser-2287, Ser-2291, Ser-2298, and Ser-2306. Position 2307 is a phosphothreonine (Thr-2307). Phosphoserine occurs at positions 2311 and 2318. Positions 2457 to 2469 (APTPSPAGGPDPT) are enriched in pro residues. Position 2504 is a phosphoserine (Ser-2504).

Found in a complex with ATXN1 and ATXN1L. As to quaternary structure, interacts with ATXN1. In terms of tissue distribution, expressed in fetal brain.

Its subcellular location is the nucleus. In terms of biological role, transcriptional repressor which plays a role in development of the central nervous system (CNS). In concert with ATXN1 and ATXN1L, involved in brain development. This is Protein capicua homolog (CIC) from Homo sapiens (Human).